A 61-amino-acid chain; its full sequence is Small ribosomal subunit protein uS14 (61 aa).

Positions 24, 27, 40, and 43 each coordinate Zn(2+).

Belongs to the universal ribosomal protein uS14 family. Zinc-binding uS14 subfamily. As to quaternary structure, part of the 30S ribosomal subunit. Contacts proteins S3 and S10. The cofactor is Zn(2+).

Functionally, binds 16S rRNA, required for the assembly of 30S particles and may also be responsible for determining the conformation of the 16S rRNA at the A site. The protein is Small ribosomal subunit protein uS14 of Macrococcus caseolyticus (strain JCSC5402) (Macrococcoides caseolyticum).